The following is a 585-amino-acid chain: Glutathione S-transferase C-terminal domain-containing protein homolog (585 aa).

The 156-residue stretch at 120 to 275 (LGFKGSCLLA…DKCARVLRDL (156 aa)) folds into the GST C-terminal domain.

This sequence belongs to the GSTCD family.

This Drosophila melanogaster (Fruit fly) protein is Glutathione S-transferase C-terminal domain-containing protein homolog.